Consider the following 616-residue polypeptide: Probable galacturonosyltransferase 4 (616 aa).

The Cytoplasmic portion of the chain corresponds to 1–6 (MMVKLR). Residues 7-29 (NLVLFFMLLTVVAHILLYTDPAA) form a helical; Signal-anchor for type II membrane protein membrane-spanning segment. Residues 30–616 (SFKTPFSKRD…VYLRECNINP (587 aa)) lie on the Lumenal side of the membrane. The segment at 132–152 (QTSEKVDEQPEPNAFGAKKDT) is disordered. 5 N-linked (GlcNAc...) asparagine glycosylation sites follow: Asn-291, Asn-326, Asn-378, Asn-481, and Asn-514.

It belongs to the glycosyltransferase 8 family. Expressed in roots, inflorescences, siliques, leaves and stems.

It localises to the golgi apparatus membrane. The protein operates within glycan metabolism; pectin biosynthesis. May be involved in pectin and/or xylans biosynthesis in cell walls. The chain is Probable galacturonosyltransferase 4 (GAUT4) from Arabidopsis thaliana (Mouse-ear cress).